A 365-amino-acid polypeptide reads, in one-letter code: Histidinol-phosphate aminotransferase 2 (365 aa).

K222 is modified (N6-(pyridoxal phosphate)lysine).

The protein belongs to the class-II pyridoxal-phosphate-dependent aminotransferase family. Histidinol-phosphate aminotransferase subfamily. In terms of assembly, homodimer. Pyridoxal 5'-phosphate serves as cofactor.

The catalysed reaction is L-histidinol phosphate + 2-oxoglutarate = 3-(imidazol-4-yl)-2-oxopropyl phosphate + L-glutamate. The protein operates within amino-acid biosynthesis; L-histidine biosynthesis; L-histidine from 5-phospho-alpha-D-ribose 1-diphosphate: step 7/9. This chain is Histidinol-phosphate aminotransferase 2 (hisC2), found in Bordetella parapertussis (strain 12822 / ATCC BAA-587 / NCTC 13253).